The chain runs to 349 residues: Magnesium-protoporphyrin IX monomethyl ester [oxidative] cyclase (349 aa).

Over residues 1 to 10 (MTATTATAPA) the composition is skewed to low complexity. The disordered stretch occupies residues 1 to 23 (MTATTATAPAMRGGGRNELPPHL).

Belongs to the AcsF family. Requires Fe cation as cofactor.

It carries out the reaction Mg-protoporphyrin IX 13-monomethyl ester + 3 NADPH + 3 O2 + 2 H(+) = 3,8-divinyl protochlorophyllide a + 3 NADP(+) + 5 H2O. Its pathway is porphyrin-containing compound metabolism; chlorophyll biosynthesis (light-independent). In terms of biological role, catalyzes the formation of the isocyclic ring in chlorophyll biosynthesis. Mediates the cyclase reaction, which results in the formation of divinylprotochlorophyllide (Pchlide) characteristic of all chlorophylls from magnesium-protoporphyrin IX 13-monomethyl ester (MgPMME). This chain is Magnesium-protoporphyrin IX monomethyl ester [oxidative] cyclase, found in Prochlorococcus marinus (strain MIT 9303).